The sequence spans 753 residues: Neuroendocrine convertase 1 (753 aa).

An N-terminal signal peptide occupies residues 1–27; that stretch reads MEQRGWTLQCTAFAFFCVWCALNSVKA. Residues 28-110 constitute a propeptide that is removed on maturation; sequence KRQFVNEWAA…QQYEKERSKR (83 aa). In terms of domain architecture, Peptidase S8 spans 129-450; it reads QWYLQDTRMT…FGLLNAKALV (322 aa). Residues Asp167 and His208 each act as charge relay system in the active site. Disulfide bonds link Cys225/Cys374 and Cys317/Cys347. The Charge relay system role is filled by Ser382. N-linked (GlcNAc...) asparagine glycosylation is present at Asn401. One can recognise a P/Homo B domain in the interval 460–597; the sequence is NVPEKKECVV…KLILHGTSSQ (138 aa). The cysteines at positions 467 and 494 are disulfide-linked. Positions 633–651 are enriched in polar residues; it reads QKSLNGNLLVPKNSSSSNV. A disordered region spans residues 633–663; the sequence is QKSLNGNLLVPKNSSSSNVEGRRDEQVQGTP. Asn645 carries N-linked (GlcNAc...) asparagine glycosylation.

It belongs to the peptidase S8 family. Furin subfamily. The cofactor is Ca(2+).

The protein resides in the cytoplasmic vesicle. Its subcellular location is the secretory vesicle. It catalyses the reaction Release of protein hormones, neuropeptides and renin from their precursors, generally by hydrolysis of -Lys-Arg-|- bonds.. In terms of biological role, involved in the processing of hormone and other protein precursors at sites comprised of pairs of basic amino acid residues. Substrates include POMC, renin, enkephalin, dynorphin, somatostatin, insulin and AGRP. The protein is Neuroendocrine convertase 1 (Pcsk1) of Mus musculus (Mouse).